The primary structure comprises 173 residues: Large ribosomal subunit protein uL5 (173 aa).

Belongs to the universal ribosomal protein uL5 family. As to quaternary structure, component of the large ribosomal subunit.

Its subcellular location is the nucleus. It localises to the cytoplasm. Component of the ribosome, a large ribonucleoprotein complex responsible for the synthesis of proteins in the cell. The small ribosomal subunit (SSU) binds messenger RNAs (mRNAs) and translates the encoded message by selecting cognate aminoacyl-transfer RNA (tRNA) molecules. The large subunit (LSU) contains the ribosomal catalytic site termed the peptidyl transferase center (PTC), which catalyzes the formation of peptide bonds, thereby polymerizing the amino acids delivered by tRNAs into a polypeptide chain. The nascent polypeptides leave the ribosome through a tunnel in the LSU and interact with protein factors that function in enzymatic processing, targeting, and the membrane insertion of nascent chains at the exit of the ribosomal tunnel. This is Large ribosomal subunit protein uL5 (RPL11) from Encephalitozoon cuniculi (strain GB-M1) (Microsporidian parasite).